The following is a 344-amino-acid chain: DNA-directed RNA polymerase subunit alpha (344 aa).

The interval 1 to 246 is alpha N-terminal domain (alpha-NTD); the sequence is MPMERFLKDF…EFLFPLVDFE (246 aa). The tract at residues 259–344 is alpha C-terminal domain (alpha-CTD); sequence ESSNLLDMSI…VLSKNVKISE (86 aa).

The protein belongs to the RNA polymerase alpha chain family. In terms of assembly, homodimer. The RNAP catalytic core consists of 2 alpha, 1 beta, 1 beta' and 1 omega subunit. When a sigma factor is associated with the core the holoenzyme is formed, which can initiate transcription.

It catalyses the reaction RNA(n) + a ribonucleoside 5'-triphosphate = RNA(n+1) + diphosphate. In terms of biological role, DNA-dependent RNA polymerase catalyzes the transcription of DNA into RNA using the four ribonucleoside triphosphates as substrates. The sequence is that of DNA-directed RNA polymerase subunit alpha from Borreliella afzelii (strain PKo) (Borrelia afzelii).